The primary structure comprises 453 residues: Secreted triacylglycerol lipase LIP3 (453 aa).

Positions Met1–Ala19 are cleaved as a signal peptide. An N-linked (GlcNAc...) asparagine glycan is attached at Asn98. A disulfide bridge connects residues Cys115 and Cys284. Ser197 acts as the Nucleophile in catalysis. N-linked (GlcNAc...) asparagine glycosylation occurs at Asn230. Residues Asp344 and His378 contribute to the active site. A disulfide bond links Cys360 and Cys406.

It belongs to the AB hydrolase superfamily. Lipase family. Class Lip subfamily.

It is found in the secreted. It localises to the cell wall. It carries out the reaction a triacylglycerol + H2O = a diacylglycerol + a fatty acid + H(+). It catalyses the reaction a monoacylglycerol + H2O = glycerol + a fatty acid + H(+). The catalysed reaction is a diacylglycerol + H2O = a monoacylglycerol + a fatty acid + H(+). Functionally, secreted lipase involved in Dandruff and seborrheic dermatitis (D/SD) probably via lipase-mediated breakdown of sebaceous lipids and release of irritating free fatty acids. Has triacylglycerol lipase activity and is able to hydrolyze triolein, tristearin, trilinolein, tripalmitoylglycerol and trihexadecenoin. Hydrolyzes diacylglycerols such as distearin, dilinolein, dipalmitoylglycerol and dipalmitolein. Mostly converts monoolein to di- and triolein, while free fatty acids are only produced in low amounts. The protein is Secreted triacylglycerol lipase LIP3 of Malassezia globosa (strain ATCC MYA-4612 / CBS 7966) (Dandruff-associated fungus).